The primary structure comprises 508 residues: Photosystem II CP47 reaction center protein (508 aa).

Transmembrane regions (helical) follow at residues 21–36 (AVHI…WAGS), 101–115 (IILS…IWHW), 140–156 (GIHL…FGAF), 203–218 (IAAG…FHLS), 237–252 (VLSS…AFVV), and 457–472 (NFAL…HGGR).

Belongs to the PsbB/PsbC family. PsbB subfamily. As to quaternary structure, PSII is composed of 1 copy each of membrane proteins PsbA, PsbB, PsbC, PsbD, PsbE, PsbF, PsbH, PsbI, PsbJ, PsbK, PsbL, PsbM, PsbT, PsbX, PsbY, PsbZ, Psb30/Ycf12, at least 3 peripheral proteins of the oxygen-evolving complex and a large number of cofactors. It forms dimeric complexes. The cofactor is Binds multiple chlorophylls. PSII binds additional chlorophylls, carotenoids and specific lipids..

It localises to the plastid. The protein localises to the chloroplast thylakoid membrane. In terms of biological role, one of the components of the core complex of photosystem II (PSII). It binds chlorophyll and helps catalyze the primary light-induced photochemical processes of PSII. PSII is a light-driven water:plastoquinone oxidoreductase, using light energy to abstract electrons from H(2)O, generating O(2) and a proton gradient subsequently used for ATP formation. The polypeptide is Photosystem II CP47 reaction center protein (Chaetosphaeridium globosum (Charophycean green alga)).